A 138-amino-acid chain; its full sequence is Basic phospholipase A2 homolog G6K49 (138 aa).

Positions 1–16 (MRTLWIMAVLLLGVEG) are cleaved as a signal peptide. 7 disulfide bridges follow: Cys42–Cys132, Cys44–Cys60, Cys59–Cys112, Cys65–Cys138, Cys66–Cys105, Cys73–Cys98, and Cys91–Cys103. The segment at 122-133 (KKHRVTVKFLCK) is important for membrane-damaging activities in eukaryotes and bacteria; heparin-binding.

It belongs to the phospholipase A2 family. Group II subfamily. K49 sub-subfamily. As to quaternary structure, homodimer; non-covalently linked. As to expression, expressed by the venom gland.

Its subcellular location is the secreted. Functionally, snake venom phospholipase A2 (PLA2) that lacks enzymatic activity. Displays myotoxic activities. A model of myotoxic mechanism has been proposed: an apo Lys49-PLA2 is activated by the entrance of a hydrophobic molecule (e.g. fatty acid) at the hydrophobic channel of the protein leading to a reorientation of a monomer. This reorientation causes a transition between 'inactive' to 'active' states, causing alignment of C-terminal and membrane-docking sites (MDoS) side-by-side and putting the membrane-disruption sites (MDiS) in the same plane, exposed to solvent and in a symmetric position for both monomers. The MDoS region stabilizes the toxin on membrane by the interaction of charged residues with phospholipid head groups. Subsequently, the MDiS region destabilizes the membrane with penetration of hydrophobic residues. This insertion causes a disorganization of the membrane, allowing an uncontrolled influx of ions (i.e. calcium and sodium), and eventually triggering irreversible intracellular alterations and cell death. This Calloselasma rhodostoma (Malayan pit viper) protein is Basic phospholipase A2 homolog G6K49.